The primary structure comprises 918 residues: Whirlin (918 aa).

The PDZ 1 domain occupies 141–224; that stretch reads LVSLRRAKAH…LVLSVYSAGR (84 aa). Residues 240–266 are disordered; sequence PQGRSTSPPSSLPQPHGSTLRQREDDR. The 83-residue stretch at 280–362 folds into the PDZ 2 domain; sequence KVNLVLGDGR…LILTVKDVGR (83 aa). Disordered regions lie at residues 387-407, 503-538, and 560-824; these read NSAG…GFYK, SMKA…TSTT, and EGTG…LEPT. Over residues 522 to 538 the composition is skewed to low complexity; the sequence is SYSDTGSSTGSHGTSTT. A compositionally biased stretch (polar residues) spans 563 to 572; it reads GETTQGSTNA. Pro residues-rich tracts occupy residues 591–600 and 638–649; these read IKPPPPPPPL and RSPPPGTAPTPG. The segment covering 654-672 has biased composition (polar residues); that stretch reads QDSPSSPIYASISHANPSS. The residue at position 696 (S696) is a Phosphoserine. Composition is skewed to polar residues over residues 754-773 and 783-798; these read QTRT…TLSE and EAST…SAKN. The span at 800–811 shows a compositional bias: basic and acidic residues; that stretch reads NGKEQPRTERTA. Residues 827–910 form the PDZ 3 domain; that stretch reads LVRVRKSAAT…TKERDYIDFL (84 aa).

Forms homooligomers. Interacts (via C-terminal PDZ domain) with MYO15A; this interaction is necessary for localization of WHRN to stereocilia tips. Interacts (via C-terminal PDZ domain) with MPP1/p55. Interacts with LRRC4C/NGL1. Interacts with MYO7A. Interacts with RPGR. Interacts with EPS8. Interacts with CASK. Interacts with CIB2. Component of USH2 complex, composed of ADGRV1, PDZD7, USH2A and WHRN. Interacts (via PDZ domains) with PDZD7; the interaction is direct. Interacts (via N-terminal PDZ domain) with USH2A (via cytoplasmic region). Interacts with ADGRV1/MASS1 (via cytoplasmic region). In terms of tissue distribution, expressed in the retina. Colocalizes with RPGR in the photoreceptor connecting cilium, a thin bridge linking the cell body and the light-sensing outer segment (at protein level). Detected in the inner ear throughout development from embryonic day 12 to 20 days after birth. Displays a dynamic pattern of expression after birth, demonstrating an ordered appearance and fade-out across stereocilia rows. Isoforms 5, 6, 7 and 8 are not detected in the retina.

It localises to the cytoplasm. The protein resides in the cell projection. The protein localises to the stereocilium. Its subcellular location is the growth cone. It is found in the photoreceptor inner segment. It localises to the synapse. Functionally, involved in hearing and vision as member of the USH2 complex. Necessary for elongation and maintenance of inner and outer hair cell stereocilia in the organ of Corti in the inner ear. Involved in the maintenance of the hair bundle ankle region, which connects stereocilia in cochlear hair cells of the inner ear. In retina photoreceptors, required for the maintenance of periciliary membrane complex that seems to play a role in regulating intracellular protein transport. The sequence is that of Whirlin from Mus musculus (Mouse).